The following is a 228-amino-acid chain: Ribose-5-phosphate isomerase A (228 aa).

Residues 29–32, 85–88, and 98–101 contribute to the substrate site; these read TGST, DGAD, and KGGG. Glu107 acts as the Proton acceptor in catalysis. Lys125 is a binding site for substrate.

The protein belongs to the ribose 5-phosphate isomerase family. Homodimer.

It carries out the reaction aldehydo-D-ribose 5-phosphate = D-ribulose 5-phosphate. It participates in carbohydrate degradation; pentose phosphate pathway; D-ribose 5-phosphate from D-ribulose 5-phosphate (non-oxidative stage): step 1/1. Functionally, catalyzes the reversible conversion of ribose-5-phosphate to ribulose 5-phosphate. This chain is Ribose-5-phosphate isomerase A, found in Staphylococcus aureus (strain MRSA252).